A 958-amino-acid polypeptide reads, in one-letter code: MIEKNYQPADIEARMSVVWEDSLAFKAGRPDRRDAVPFTIVIPPPNVTGSLHMGHALNNTLQDILCRFERMRGRDVLWQPGTDHAGIATQMVVERQLMERQQPGRREMGREKFLERVWQWKAESGDTIINQLKRLGASCDWSRERFTMDEGLSKAVIKVFVELHRDGLIYKDKRLVNWDTKLLTAISDLEVQQTEVKGSLWYLRYPIEGKTFSPEDPSSFIVVATTRPETMLGDTGVAVHPDDERYQKLIGKHVILPLVGRKVEIVADDYSDPEKGSGAVKVTPAHDFNDFEVGNRHGLRRISVLDKEGCLDLLDNEDYLRDLPEGAAQFAEEFNKVDRFVARKRIVERLESFGFVERIEPHTHMVPHGDRSNSVIEPYLTDQWYVDAKTLAKPAIAAVRSGETSFVPKNWEKTYFEWMENIQPWCISRQLWWGHQIPAWYGPDGKVFVAETEEEAISHALGYYVEQEVITAEQGREMALDRNKREGFITRDEDVLDTWFSSALWPFSTLGWPEDAPEVQRYYPTNALVTGFDIIFFWVARMMMMGLHFMKEVPFSTIYIHALVRDEKGAKMSKSKGNVIDPLHLIDEYGADALRFTLAAMAAQGRDIKLATSRVEGYRNFATKLWNASRFAEMNHCAVPEGFEPAKAKETLNRWIAHESAHTTREVTEAIEAYRFNDAAGAIYRFVWNVYCDWYVELAKPVLLGPDSPAKDETRAMVAWARDEILKLLHPFMPFITEELWEVTAKRDGLLALAAWPLKPAEPTPEQLAMFAAAAGPTDPLISPALIVPIFDHADFTDPKAEAEIGWVIDLVTQIRSVRAEMNIPPATLTALVLAGASAETRERAPRWTDVIKRMARLSDISFADRAPDGAVQLLVRGEVAALPLKGVIDVAAERTRLDKEIGKADADIKRAESKLANEKFVANAAEEVVEEEREKREAALARKAKLLEALERLKQAS.

The 'HIGH' region motif lies at Pro-45–His-55. Positions Lys-571–Ser-575 match the 'KMSKS' region motif. ATP is bound at residue Lys-574. Residues Ala-892–Ser-958 are a coiled coil.

It belongs to the class-I aminoacyl-tRNA synthetase family. ValS type 1 subfamily. In terms of assembly, monomer.

It localises to the cytoplasm. It carries out the reaction tRNA(Val) + L-valine + ATP = L-valyl-tRNA(Val) + AMP + diphosphate. In terms of biological role, catalyzes the attachment of valine to tRNA(Val). As ValRS can inadvertently accommodate and process structurally similar amino acids such as threonine, to avoid such errors, it has a 'posttransfer' editing activity that hydrolyzes mischarged Thr-tRNA(Val) in a tRNA-dependent manner. The chain is Valine--tRNA ligase from Bradyrhizobium diazoefficiens (strain JCM 10833 / BCRC 13528 / IAM 13628 / NBRC 14792 / USDA 110).